The primary structure comprises 599 residues: Elongation factor 4 (599 aa).

In terms of domain architecture, tr-type G spans 5-187 (SHIRNFSIIA…RLVHTIPAPE (183 aa)). Residues 17 to 22 (DHGKST) and 134 to 137 (NKMD) each bind GTP.

Belongs to the TRAFAC class translation factor GTPase superfamily. Classic translation factor GTPase family. LepA subfamily.

It is found in the cell inner membrane. The enzyme catalyses GTP + H2O = GDP + phosphate + H(+). Required for accurate and efficient protein synthesis under certain stress conditions. May act as a fidelity factor of the translation reaction, by catalyzing a one-codon backward translocation of tRNAs on improperly translocated ribosomes. Back-translocation proceeds from a post-translocation (POST) complex to a pre-translocation (PRE) complex, thus giving elongation factor G a second chance to translocate the tRNAs correctly. Binds to ribosomes in a GTP-dependent manner. In Pseudomonas putida (strain ATCC 47054 / DSM 6125 / CFBP 8728 / NCIMB 11950 / KT2440), this protein is Elongation factor 4.